The chain runs to 489 residues: MFS-type transporter MFS19 (489 aa).

The segment covering 1–12 has biased composition (basic and acidic residues); the sequence is MAHSTAGDRDPE. Positions 1-42 are disordered; the sequence is MAHSTAGDRDPEVGSEQHSSIAQLHTESMSDPWGDSNSPENP. A compositionally biased stretch (polar residues) spans 16–41; that stretch reads EQHSSIAQLHTESMSDPWGDSNSPEN. Residues 52 to 72 traverse the membrane as a helical segment; that stretch reads FHVAIVSIFTLTANLAATMFA. 2 N-linked (GlcNAc...) asparagine glycosylation sites follow: N83 and N86. 11 helical membrane passes run 91 to 111, 127 to 147, 149 to 169, 180 to 200, 208 to 228, 282 to 302, 321 to 341, 361 to 381, 388 to 408, 425 to 445, and 454 to 474; these read AMTVSLYVLGFAFGPLLLAPL, VYIAFTVGCAFSTNVSMFLVF, FLCGCAASGPMSIGGGTVADI, ALFAMGPLLGPVLGPIIGGYV, WTFRIILIMSGIIGLATMFFM, PIVLLISLYTGVLFGLIFLLF, GLAYLGLGIGMFLGLVVFSIL, LILMKWFGPITPLGCFMYGWS, WIVPILGTSIIGFGSLFVVIP, ALAANLLVRSPFGAFLGLVAA, and GWGNSVLGFITLAFTPVPWLF.

The protein belongs to the major facilitator superfamily.

The protein localises to the cell membrane. Its function is as follows. MFS-type efflux pump involved in the modulation susceptibility to various compounds including cumyl hydroperoxide, potassium superoxide, many singlet oxygen-generating compounds (eosin Y, rose Bengal, hematoporphyrin, methylene blue, and cercosporin), and the cell wall biosynthesis inhibitor Congo red. Involved in oxidative stress tolerance, colonization, and lesion formation. The sequence is that of MFS-type transporter MFS19 from Alternaria alternata (Alternaria rot fungus).